A 382-amino-acid polypeptide reads, in one-letter code: Opsin Rh5 (382 aa).

Over Met-1–Ile-49 the chain is Extracellular. Residue Asn-14 is glycosylated (N-linked (GlcNAc...) asparagine). Residues Tyr-50–Ile-76 traverse the membrane as a helical segment. Residues Phe-77–Asn-88 lie on the Cytoplasmic side of the membrane. Residues Leu-89–Ala-112 form a helical membrane-spanning segment. Topologically, residues Thr-113–Tyr-127 are extracellular. Residues Cys-124 and Cys-201 are joined by a disulfide bond. The chain crosses the membrane as a helical span at residues Ala-128 to Phe-147. Over Asp-148–Gln-165 the chain is Cytoplasmic. Residues Ile-166–Gly-190 traverse the membrane as a helical segment. The Extracellular portion of the chain corresponds to Arg-191 to Leu-214. The chain crosses the membrane as a helical span at residues Phe-215–Val-242. The Cytoplasmic segment spans residues Arg-243–Lys-278. The helical transmembrane segment at Ala-279–Cys-302 threads the bilayer. Residues Phe-303–Thr-310 are Extracellular-facing. Residues Pro-311–Ser-335 form a helical membrane-spanning segment. Lys-322 is subject to N6-(retinylidene)lysine. At His-336–Asn-382 the chain is on the cytoplasmic side. Residues Ala-357–Asn-382 are disordered. A compositionally biased stretch (polar residues) spans Thr-358–Asn-382.

It belongs to the G-protein coupled receptor 1 family. Opsin subfamily. Phosphorylated on some or all of the serine and threonine residues present in the C-terminal region. Expressed specifically in the retina. Each Drosophila eye is composed of 800 facets or ommatidia. Each ommatidium contains 8 photoreceptor cells (R1-R8), the R1 to R6 cells are outer cells, while R7 and R8 are inner cells. Rh5 is expressed only in R8 photoreceptor cells in a subset of ommatidia.

It is found in the cell projection. The protein resides in the rhabdomere membrane. In terms of biological role, visual pigments are the light-absorbing molecules that mediate vision. They consist of an apoprotein, opsin, covalently linked to cis-retinal. The protein is Opsin Rh5 (Rh5) of Drosophila melanogaster (Fruit fly).